The primary structure comprises 340 residues: Guanine nucleotide-binding protein subunit beta-4 (340 aa).

N-acetylserine is present on serine 2. At serine 2 the chain carries Phosphoserine. WD repeat units follow at residues 53-92, 95-134, 141-179, 182-221, and 224-263; these read GHLAKIYAMHWGYDSRLLVSASQDGKLIIWDSYTTNKMHA, LRSSWVMTCAYAPSGNYVACGGLDNICSIYNLKTREGNVR, GHTGYLSCCRFLDDGQIITSSGDTTCALWDIETGQQTTT, GHSGDVMSLSLSPDLKTFVSGACDASSKLWDIRDGMCRQS, and GHISDINAVSFFPSGYAFATGSDDATCRLFDLRADQELLL. Histidine 266 carries the post-translational modification Phosphohistidine. 2 WD repeats span residues 268–307 and 310–339; these read NIICGITSVAFSKSGRLLLAGYDDFNCSVWDALKGGRAGV and GHDNRVSCLGVTDDGMAVATGSWDSFLRIW.

The protein belongs to the WD repeat G protein beta family. G proteins are composed of 3 units, alpha, beta and gamma. In terms of tissue distribution, widely expressed in the brain. Highest levels found in the hippocampus and layers v and vi of the neocortex.

Guanine nucleotide-binding proteins (G proteins) are involved as a modulator or transducer in various transmembrane signaling systems. The beta and gamma chains are required for the GTPase activity, for replacement of GDP by GTP, and for G protein-effector interaction. This chain is Guanine nucleotide-binding protein subunit beta-4 (Gnb4), found in Rattus norvegicus (Rat).